The chain runs to 400 residues: ATP-dependent RNA helicase Ddx1 (400 aa).

A Helicase ATP-binding domain is found at Asp-1–Trp-60. The DEAD box signature appears at Asp-2 to Asp-5. The 202-residue stretch at Thr-115–Val-316 folds into the Helicase C-terminal domain.

The protein belongs to the DEAD box helicase family. DDX1 subfamily.

It carries out the reaction ATP + H2O = ADP + phosphate + H(+). In terms of biological role, acts as an ATP-dependent RNA helicase, able to unwind both RNA-RNA and RNA-DNA duplexes. Possesses 5' single-stranded RNA overhang nuclease activity. This Drosophila virilis (Fruit fly) protein is ATP-dependent RNA helicase Ddx1 (Ddx1).